The sequence spans 1571 residues: Phosphatidylinositol 3-kinase 1 (1571 aa).

Residues 1-73 (MNSIESSSND…NNDNNNNNNN (73 aa)) are compositionally biased toward low complexity. Disordered regions lie at residues 1–119 (MNSI…HVNN), 157–195 (GYDV…RTRN), and 283–430 (NSKL…IIKR). Residues 74 to 85 (IDKKRKDSKNKQ) show a composition bias toward basic and acidic residues. The span at 101–119 (NSNDSNCSSGSSSGGHVNN) shows a compositional bias: low complexity. A compositionally biased stretch (basic and acidic residues) spans 283-292 (NSKLDTEEKP). Positions 294-324 (TTTTTTTTTSTSISTSTPTTTTTTTTNTSTT) are enriched in low complexity. A compositionally biased stretch (polar residues) spans 325–337 (NDITIKPKTSPTK). Composition is skewed to low complexity over residues 360–382 (KVST…PTGK) and 405–424 (NNTN…NNNN). Residues 530 to 627 (IKTSFNILFL…IPKLKVIEKS (98 aa)) form the PI3K-ABD domain. Residues 700–789 (GNKILISIFL…GTKPQLTLIQ (90 aa)) form the PI3K-RBD domain. The 170-residue stretch at 851 to 1020 (IKKPFRVKVM…GLTLEFEEFN (170 aa)) folds into the C2 PI3K-type domain. The 177-residue stretch at 1040–1216 (QPPTNINSNE…GILLESYLYA (177 aa)) folds into the PIK helical domain. The PI3K/PI4K catalytic domain occupies 1280-1558 (IINKSKYMDS…LIHESLATKT (279 aa)). The tract at residues 1286 to 1292 (YMDSKKL) is G-loop. Residues 1424–1432 (GIGDRHNDN) form a catalytic loop region. The activation loop stretch occupies residues 1443-1469 (HIDFGHFLGNYKKKFGFKRERAPFVFT).

Belongs to the PI3/PI4-kinase family.

The catalysed reaction is a 1,2-diacyl-sn-glycero-3-phospho-(1D-myo-inositol) + ATP = a 1,2-diacyl-sn-glycero-3-phospho-(1D-myo-inositol-3-phosphate) + ADP + H(+). This is Phosphatidylinositol 3-kinase 1 (pikA) from Dictyostelium discoideum (Social amoeba).